A 457-amino-acid chain; its full sequence is tRNA (guanine(37)-N(1))-methyltransferase (457 aa).

S-adenosyl-L-methionine-binding positions include His-225, 263-264 (DL), 291-292 (DG), and Asn-358.

Belongs to the class I-like SAM-binding methyltransferase superfamily. TRM5/TYW2 family. In terms of assembly, monomer.

It is found in the mitochondrion matrix. The protein resides in the nucleus. Its subcellular location is the cytoplasm. It carries out the reaction guanosine(37) in tRNA + S-adenosyl-L-methionine = N(1)-methylguanosine(37) in tRNA + S-adenosyl-L-homocysteine + H(+). In terms of biological role, specifically methylates the N1 position of guanosine-37 in various cytoplasmic and mitochondrial tRNAs. Methylation is not dependent on the nature of the nucleoside 5' of the target nucleoside. This is the first step in the biosynthesis of wybutosine (yW), a modified base adjacent to the anticodon of tRNAs and required for accurate decoding. The chain is tRNA (guanine(37)-N(1))-methyltransferase from Coprinopsis cinerea (strain Okayama-7 / 130 / ATCC MYA-4618 / FGSC 9003) (Inky cap fungus).